We begin with the raw amino-acid sequence, 658 residues long: DNA mismatch repair protein MutL (658 aa).

The span at 114-130 (RQEDSSHATQVKAEDGK) shows a compositional bias: basic and acidic residues. Disordered regions lie at residues 114-138 (RQED…TAAA) and 353-405 (PMPS…HSLS). Residues 361-372 (ENLFDSASNHPT) show a composition bias toward polar residues.

The protein belongs to the DNA mismatch repair MutL/HexB family.

This protein is involved in the repair of mismatches in DNA. It is required for dam-dependent methyl-directed DNA mismatch repair. May act as a 'molecular matchmaker', a protein that promotes the formation of a stable complex between two or more DNA-binding proteins in an ATP-dependent manner without itself being part of a final effector complex. This is DNA mismatch repair protein MutL from Neisseria gonorrhoeae (strain NCCP11945).